A 253-amino-acid chain; its full sequence is Ubiquinone/menaquinone biosynthesis C-methyltransferase UbiE (253 aa).

Residues Thr76, Asp97, 125-126, and Ser142 each bind S-adenosyl-L-methionine; that span reads NA.

Belongs to the class I-like SAM-binding methyltransferase superfamily. MenG/UbiE family.

The catalysed reaction is a 2-demethylmenaquinol + S-adenosyl-L-methionine = a menaquinol + S-adenosyl-L-homocysteine + H(+). The enzyme catalyses a 2-methoxy-6-(all-trans-polyprenyl)benzene-1,4-diol + S-adenosyl-L-methionine = a 5-methoxy-2-methyl-3-(all-trans-polyprenyl)benzene-1,4-diol + S-adenosyl-L-homocysteine + H(+). Its pathway is quinol/quinone metabolism; menaquinone biosynthesis; menaquinol from 1,4-dihydroxy-2-naphthoate: step 2/2. It participates in cofactor biosynthesis; ubiquinone biosynthesis. Its function is as follows. Methyltransferase required for the conversion of demethylmenaquinol (DMKH2) to menaquinol (MKH2) and the conversion of 2-polyprenyl-6-methoxy-1,4-benzoquinol (DDMQH2) to 2-polyprenyl-3-methyl-6-methoxy-1,4-benzoquinol (DMQH2). The sequence is that of Ubiquinone/menaquinone biosynthesis C-methyltransferase UbiE from Xanthomonas campestris pv. campestris (strain ATCC 33913 / DSM 3586 / NCPPB 528 / LMG 568 / P 25).